A 309-amino-acid polypeptide reads, in one-letter code: Thioesterase lcsJ (309 aa).

A helical transmembrane segment spans residues 11–31 (IAQVHGFVFSWWGVILLLAII). Residues 61–83 (ASPTAENAQRRVPKTPKTGATDT) are disordered. An N-linked (GlcNAc...) asparagine glycan is attached at N112. The segment at 239 to 275 (SGWIPPRPESTGNSKSLDSLQANGHGATENGKHDAKD) is disordered. Residues 248–260 (STGNSKSLDSLQA) are compositionally biased toward polar residues.

The protein belongs to the lcsJ thioesterase family.

Its subcellular location is the membrane. It participates in secondary metabolite biosynthesis. Functionally, thioesterase; part of the gene cluster that mediates the biosynthesis of the lipopeptide antibiotics leucinostatins that show extensive biological activities, including antimalarial, antiviral, antibacterial, antifungal, and antitumor activities, as well as phytotoxic. Leucinostatin A contains nine amino acid residues, including the unusual amino acid 4-methyl-L-proline (MePro), 2-amino-6-hydroxy-4-methyl-8-oxodecanoic acid (AHyMeOA), 3-hydroxyleucine (HyLeu), alpha-aminoisobutyric acid (AIB), beta-Ala, a 4-methylhex-2-enoic acid at the N-terminus as well as a N1,N1-dimethylpropane-1,2-diamine (DPD) at the C-terminus. The biosynthesis of leucinostatins is probably initiated with the assembly of 4-methylhex-2-enoic acid by a reducing PKS. Two reducing polyketide synthases, lcsB and lcsC, have been identified in the cluster and it is not clear which is the one that assembles 4-methylhex-2-enoic acid since both contain KS, AT, DH, cMT, ER, KR and ACP domains. The polyketide residue might be transferred to the NRPS lcsA, mediated by two additional enzymes, the acyl-CoA ligase lcsD and the thioesterase lcsE. The linear polyketide carboxylic acid, which is released from PKS, is converted to a CoA thioester by lcsD, and then lcsE hydrolyzes the thiol bond and shuttles the polyketide intermediate to lcsA. The C domain of the first module catalyzed the condensation of 4-methylhex-2-enoic acid and MePro carried by domain A1, followed by successive condensations of nine amino acids to trigger the elongation of the linear peptide. A5 and A6 domains of lcsA are proposed to incorporate leucine, A2 AHyMeOA, and A3 incorporates HyLeu. A4, A7 and A8 incorporate AIB. The AHyMeOA in leucinostatin A activated by the A2 might be produced by the second PKS (lcsB or lcsC) present within the cluster. The MePro is probably produced via leucine cyclization and may originate from a separate pathway, independent of the cluster. Another nonproteinogenic amino acid, beta-Ala, could be produced by an aspartic acid decarboxylase also localized outside of the cluster. Two candidates are VFPBJ_01400 and VFPBJ_10476. The final peptide scaffold may be released by the NAD(P)H-dependent thioester reductase (TE) at the C-terminal region of lcsA. Transamination of the lcsA product by the transaminase lcsP may produce DPD at the C-terminus. Further hydroxylation steps performed alternatively by the cytochrome P450 monooxygenases lcsI, lcsK and lcsN then yield the non-methylated leucinostatins precursor. It is also possible that leucines can be hydroxylated prior to their incorporation into the peptide. Varying extents of methylation then lead to the formation of leucinostatins A and B. This is Thioesterase lcsJ from Purpureocillium lilacinum (Paecilomyces lilacinus).